The following is a 447-amino-acid chain: Na(+)-translocating NADH-quinone reductase subunit A (447 aa).

It belongs to the NqrA family. As to quaternary structure, composed of six subunits; NqrA, NqrB, NqrC, NqrD, NqrE and NqrF.

It catalyses the reaction a ubiquinone + n Na(+)(in) + NADH + H(+) = a ubiquinol + n Na(+)(out) + NAD(+). Its function is as follows. NQR complex catalyzes the reduction of ubiquinone-1 to ubiquinol by two successive reactions, coupled with the transport of Na(+) ions from the cytoplasm to the periplasm. NqrA to NqrE are probably involved in the second step, the conversion of ubisemiquinone to ubiquinol. This chain is Na(+)-translocating NADH-quinone reductase subunit A, found in Haemophilus influenzae (strain PittEE).